A 180-amino-acid polypeptide reads, in one-letter code: Centromere protein M (180 aa).

As to quaternary structure, component of the CENPA-NAC complex, at least composed of CENPA, CENPC, CENPH, CENPM, CENPN, CENPT and CENPU. The CENPA-NAC complex interacts with the CENPA-CAD complex, composed of CENPI, CENPK, CENPL, CENPO, CENPP, CENPQ, CENPR and CENPS. Isoform 3 is highly expressed in spleen, and intermediately in heart, prostate and ovary. Isoform 3 is highly expressed in resting CD19 B-cells and B-lineage chronic lymphocytic leukemia (B-CLL) cells and weakly expressed in activated B-cells. Isoform 1 is selectively expressed in activated CD19 cells and weakly in resting CD19 B-cells.

The protein resides in the nucleus. It is found in the cytoplasm. Its subcellular location is the chromosome. It localises to the centromere. The protein localises to the kinetochore. Functionally, component of the CENPA-NAC (nucleosome-associated) complex, a complex that plays a central role in assembly of kinetochore proteins, mitotic progression and chromosome segregation. The CENPA-NAC complex recruits the CENPA-CAD (nucleosome distal) complex and may be involved in incorporation of newly synthesized CENPA into centromeres. In Homo sapiens (Human), this protein is Centromere protein M (CENPM).